Here is a 387-residue protein sequence, read N- to C-terminus: Bifunctional chorismate mutase/prephenate dehydratase (387 aa).

The 92-residue stretch at 1 to 92 (MNPDNPLLAL…DSVLTQQALL (92 aa)) folds into the Chorismate mutase domain. Substrate is bound by residues Arg-11, Arg-28, Lys-39, Asp-48, Glu-52, Ser-84, and Gln-88. In terms of domain architecture, Prephenate dehydratase spans 105-285 (RIAFLGPKGS…NHTRFIVLAR (181 aa)). Positions 299–376 (TLIMATGQQA…RSLKVLGCYP (78 aa)) constitute an ACT domain.

The protein localises to the cytoplasm. It carries out the reaction chorismate = prephenate. It catalyses the reaction prephenate + H(+) = 3-phenylpyruvate + CO2 + H2O. It functions in the pathway amino-acid biosynthesis; L-phenylalanine biosynthesis; phenylpyruvate from prephenate: step 1/1. Its pathway is metabolic intermediate biosynthesis; prephenate biosynthesis; prephenate from chorismate: step 1/1. Functionally, catalyzes the Claisen rearrangement of chorismate to prephenate and the decarboxylation/dehydration of prephenate to phenylpyruvate. This is Bifunctional chorismate mutase/prephenate dehydratase (pheA) from Enterobacter agglomerans (Erwinia herbicola).